The primary structure comprises 901 residues: Protein translocase subunit SecA (901 aa).

Residues Gln87, 105–109 (GEGKT), and Asp512 each bind ATP. Positions 885, 887, 896, and 897 each coordinate Zn(2+).

Belongs to the SecA family. As to quaternary structure, monomer and homodimer. Part of the essential Sec protein translocation apparatus which comprises SecA, SecYEG and auxiliary proteins SecDF-YajC and YidC. Zn(2+) is required as a cofactor.

Its subcellular location is the cell inner membrane. The protein resides in the cytoplasm. It catalyses the reaction ATP + H2O + cellular proteinSide 1 = ADP + phosphate + cellular proteinSide 2.. Its function is as follows. Part of the Sec protein translocase complex. Interacts with the SecYEG preprotein conducting channel. Has a central role in coupling the hydrolysis of ATP to the transfer of proteins into and across the cell membrane, serving both as a receptor for the preprotein-SecB complex and as an ATP-driven molecular motor driving the stepwise translocation of polypeptide chains across the membrane. The chain is Protein translocase subunit SecA from Salmonella enteritidis PT4 (strain P125109).